The following is a 126-amino-acid chain: SGSCTVKTCWMRLPTFRTVGDFLKDRFDGASRVIYGNKGSNRASRVELHHLEPENPAHKPPSPVDLVYFEKSPNFCTYSGKTGTVGTAGRSCNSSSPALDGCELLCCGRGYRTRMQRVTERCNCTF.

A lipid anchor (O-palmitoleoyl serine; by PORCN) is attached at serine 1. Cysteine 92 and cysteine 107 are disulfide-bonded. Asparagine 93 and asparagine 123 each carry an N-linked (GlcNAc...) asparagine glycan.

It belongs to the Wnt family. Palmitoleoylation is required for efficient binding to frizzled receptors. Palmitoleoylation is necessary for proper trafficking to cell surface. Depalmitoleoylated by NOTUM, leading to inhibit Wnt signaling pathway.

The protein localises to the secreted. Its subcellular location is the extracellular space. It is found in the extracellular matrix. Its function is as follows. Ligand for members of the frizzled family of seven transmembrane receptors. Acts in the canonical Wnt signaling pathway by promoting beta-catenin-dependent transcriptional activation. Plays an essential role in the development of the embryonic brain and central nervous system (CNS). Has a role in osteoblast function, bone development and bone homeostasis. This is Protein Wnt-1 (WNT-1) from Sceloporus occidentalis (Western fence lizard).